Consider the following 267-residue polypeptide: 2-keto-3-deoxy-L-rhamnonate aldolase (267 aa).

The active-site Proton acceptor is the histidine 49. Glutamine 151 provides a ligand contact to substrate. Glutamate 153 contributes to the Mg(2+) binding site. Residues alanine 178 and aspartate 179 each coordinate substrate. Residue aspartate 179 coordinates Mg(2+).

This sequence belongs to the HpcH/HpaI aldolase family. KDR aldolase subfamily. Homohexamer. Requires Mg(2+) as cofactor.

It catalyses the reaction 2-dehydro-3-deoxy-L-rhamnonate = (S)-lactaldehyde + pyruvate. In terms of biological role, catalyzes the reversible retro-aldol cleavage of 2-keto-3-deoxy-L-rhamnonate (KDR) to pyruvate and lactaldehyde. This is 2-keto-3-deoxy-L-rhamnonate aldolase from Salmonella gallinarum (strain 287/91 / NCTC 13346).